Reading from the N-terminus, the 559-residue chain is Extracellular matrix protein 1 (559 aa).

The signal sequence occupies residues 1–19 (MGTVSRAALILACLALASA). Tandem repeats lie at residues 170-298 (HCQQ…RPDY) and 302-424 (PCPV…YPNY). The tract at residues 170-424 (HCQQGRRGVW…FAHLAPYPNY (255 aa)) is 2 X approximate repeats. Residue asparagine 373 is glycosylated (N-linked (GlcNAc...) asparagine). 2 N-linked (GlcNAc...) (high mannose) asparagine glycosylation sites follow: asparagine 463 and asparagine 535. Positions 535–559 (NATGLGEQGPTRGTDANPAPGSKEE) are disordered. Residue serine 556 is modified to Phosphoserine.

As to quaternary structure, interacts (via C-terminus) with HSPG2 (via C-terminus). Interacts with EFEMP1/FBLN3 and LAMB3. Interacts with MMP9. As to expression, expressed in the surrounding connective tissues of developing long bones, but not in the cartilage. The long isoform is expressed in a number of tissues including liver, heart and lungs. The short isoform is expressed in skin and cartilage-containing tissues such as tail and front paw. No expression is found in brain.

The protein localises to the secreted. Its subcellular location is the extracellular space. It localises to the extracellular matrix. Functionally, involved in endochondral bone formation as negative regulator of bone mineralization. Stimulates the proliferation of endothelial cells and promotes angiogenesis. Inhibits MMP9 proteolytic activity. This is Extracellular matrix protein 1 (Ecm1) from Mus musculus (Mouse).